We begin with the raw amino-acid sequence, 1167 residues long: Melanoma receptor tyrosine-protein kinase (1167 aa).

A signal peptide spans M1 to T25. Over D26–S642 the chain is Extracellular. N-linked (GlcNAc...) asparagine glycans are attached at residues N114, N144, and N201. Disulfide bonds link C195/C204, C199/C212, C220/C228, C224/C236, C237/C245, C241/C253, C256/C265, C269/C296, C300/C311, C315/C330, and C333/C337. N-linked (GlcNAc...) asparagine glycosylation is found at N356, N365, N398, N417, and N501. 9 disulfide bridges follow: C504-C513, C508-C521, C524-C533, C537-C553, C556-C569, C560-C577, C593-C615, C618-C626, and C622-C634. N576 carries N-linked (GlcNAc...) asparagine glycosylation. N-linked (GlcNAc...) asparagine glycosylation is present at N621. Residues S643–L665 traverse the membrane as a helical segment. At L666–R1167 the chain is on the cytoplasmic side. Residues F710–L977 enclose the Protein kinase domain. ATP contacts are provided by residues L716–V724 and K743. D835 (proton acceptor) is an active-site residue.

This sequence belongs to the protein kinase superfamily. Tyr protein kinase family. EGF receptor subfamily.

It is found in the membrane. The catalysed reaction is L-tyrosyl-[protein] + ATP = O-phospho-L-tyrosyl-[protein] + ADP + H(+). Functionally, probable receptor with tyrosine-protein kinase activity. This is Melanoma receptor tyrosine-protein kinase (xmrk) from Xiphophorus maculatus (Southern platyfish).